We begin with the raw amino-acid sequence, 28 residues long: leu operon leader peptide (28 aa).

Its function is as follows. Involved in control of the biosynthesis of leucine. The chain is leu operon leader peptide (leuL) from Salmonella typhimurium (strain LT2 / SGSC1412 / ATCC 700720).